The primary structure comprises 586 residues: MRVLVAETGREDNVSVHSREVSVNGSDSGTGNDAYKLETDDEHPPATPVRGLSTRSQKRPFRPLTIQQDEDVENDTGMNTEYNDDNSSLVNTPRDSTTYAETNSPNTEKLAGRDDDRSLLNLIDRGEIDSKRQRHYVPVHCKRMPKKEITLNQKLYVSQVIGPADAPKSKTIFGKRIMQWEPSQFKESVWASEISKSGKYLATAGKDAIIRVWKVIETPERRETLLKEGPQSCGRFFTPSSIFEPEPVLECVGHNAEVLSISWSKNDFLLTSSADRTVRLWHPKSTKSLAVFRHNEIVTCVAFHPIDDRYFVSGSLDCKIQLWSILRHKILHWTELEYVVSTICFYPDGESIVVGMFYGLCAIYETKNLQYVSSWLIHHSPSRNKKCRVTGLQCASIIPNDSKSDNVVLVSTNDNAIRLYNTVTHALVLKLSDAHRVNGRVLSRLSEDNSYIISGSDTNEVVLWHIPNKVLINASRKRSVILHLPTETFKVCSERLTSTIIAPARTAVEAKESEHDRSLIAEGYNLVKPHSHRSYGTPPVHPIDIIIATNMAGMTIVLCVDYDLGNSHHGFRNSKFGHFVKRLLRT.

Positions methionine 1–aspartate 115 are disordered. The segment covering threonine 8 to glutamate 20 has biased composition (basic and acidic residues). Polar residues predominate over residues valine 21–glycine 31. The segment covering tyrosine 35 to proline 44 has biased composition (basic and acidic residues). A compositionally biased stretch (polar residues) spans threonine 76–threonine 107. WD repeat units lie at residues glutamine 184 to glutamate 223, glycine 253 to valine 291, arginine 293 to tryptophan 333, glutamate 335 to serine 374, cysteine 387 to lysine 430, and serine 432 to alanine 474.

It localises to the cytoplasm. The protein localises to the nucleus. This is an uncharacterized protein from Schizosaccharomyces pombe (strain 972 / ATCC 24843) (Fission yeast).